Here is a 301-residue protein sequence, read N- to C-terminus: tRNA pseudouridine synthase B (301 aa).

Aspartate 38 acts as the Nucleophile in catalysis.

The protein belongs to the pseudouridine synthase TruB family. Type 1 subfamily.

It carries out the reaction uridine(55) in tRNA = pseudouridine(55) in tRNA. In terms of biological role, responsible for synthesis of pseudouridine from uracil-55 in the psi GC loop of transfer RNAs. This is tRNA pseudouridine synthase B from Limosilactobacillus reuteri (strain DSM 20016) (Lactobacillus reuteri).